The following is a 501-amino-acid chain: ATP synthase subunit alpha (501 aa).

Gly169–Thr176 contributes to the ATP binding site.

This sequence belongs to the ATPase alpha/beta chains family. F-type ATPases have 2 components, CF(1) - the catalytic core - and CF(0) - the membrane proton channel. CF(1) has five subunits: alpha(3), beta(3), gamma(1), delta(1), epsilon(1). CF(0) has three main subunits: a(1), b(2) and c(9-12). The alpha and beta chains form an alternating ring which encloses part of the gamma chain. CF(1) is attached to CF(0) by a central stalk formed by the gamma and epsilon chains, while a peripheral stalk is formed by the delta and b chains.

The protein localises to the cell membrane. It catalyses the reaction ATP + H2O + 4 H(+)(in) = ADP + phosphate + 5 H(+)(out). Produces ATP from ADP in the presence of a proton gradient across the membrane. The alpha chain is a regulatory subunit. In Streptococcus thermophilus (strain CNRZ 1066), this protein is ATP synthase subunit alpha.